The sequence spans 436 residues: UPF0597 protein YhaM (436 aa).

The protein belongs to the UPF0597 family.

The protein is UPF0597 protein YhaM of Escherichia coli O45:K1 (strain S88 / ExPEC).